Consider the following 58-residue polypeptide: Large ribosomal subunit protein uL30 (58 aa).

It belongs to the universal ribosomal protein uL30 family. As to quaternary structure, part of the 50S ribosomal subunit.

This Porphyromonas gingivalis (strain ATCC 33277 / DSM 20709 / CIP 103683 / JCM 12257 / NCTC 11834 / 2561) protein is Large ribosomal subunit protein uL30.